We begin with the raw amino-acid sequence, 1109 residues long: DNA mismatch repair protein MSH7 (1109 aa).

2 disordered regions span residues 19–45 (TKGLVSGDAASGGGGSGGPRFNVKEGD) and 61–86 (DEVRGTDTPPEKVPRRVLPSGFKPAE). Residues 61–74 (DEVRGTDTPPEKVP) are compositionally biased toward basic and acidic residues. 853-860 (GPNMGGKS) serves as a coordination point for ATP.

The protein belongs to the DNA mismatch repair MutS family. Heterodimer consisting of MSH2-MSH7 (MutS gamma).

The protein resides in the nucleus. Its function is as follows. Component of the post-replicative DNA mismatch repair system (MMR). Forms the heterodimer MutS gamma (MSH2-MSH7 heterodimer) which binds to DNA mismatches thereby initiating DNA repair. MutS gamma recognizes specifically the T/G single base mismatch, but not trinucleotide insertion-deletion loops (IDL). The polypeptide is DNA mismatch repair protein MSH7 (MSH7) (Arabidopsis thaliana (Mouse-ear cress)).